Here is a 365-residue protein sequence, read N- to C-terminus: Peptide chain release factor 1 (365 aa).

At glutamine 242 the chain carries N5-methylglutamine.

Belongs to the prokaryotic/mitochondrial release factor family. In terms of processing, methylated by PrmC. Methylation increases the termination efficiency of RF1.

It is found in the cytoplasm. Its function is as follows. Peptide chain release factor 1 directs the termination of translation in response to the peptide chain termination codons UAG and UAA. The polypeptide is Peptide chain release factor 1 (Fusobacterium nucleatum subsp. nucleatum (strain ATCC 25586 / DSM 15643 / BCRC 10681 / CIP 101130 / JCM 8532 / KCTC 2640 / LMG 13131 / VPI 4355)).